A 450-amino-acid chain; its full sequence is Class E vacuolar protein-sorting machinery protein HSE1 (450 aa).

Positions 15–145 constitute a VHS domain; it reads ATDGKLRSDN…RIRRKWPGLL (131 aa). Disordered regions lie at residues 141–167, 179–212, and 374–450; these read WPGLLEEPEKPSKQKVSHQEATDEDQE, FEKSKQQSNGSAVQSNSLQDHNQGQQQPQQQTTS, and PNTQ…PPNY. Positions 147–167 are enriched in basic and acidic residues; the sequence is EPEKPSKQKVSHQEATDEDQE. A UIM domain is found at 163-182; the sequence is DEDQELQRALKMSLEEFEKS. Residues 184–196 show a composition bias toward polar residues; that stretch reads QQSNGSAVQSNSL. Residues 197–209 show a composition bias toward low complexity; it reads QDHNQGQQQPQQQ. The region spanning 212–271 is the SH3 domain; it reads SGIRRVRALYDLNANEQDELSFRKGDVIVVLEQVYRDWWRGSLHGKIGIFPLNYVTPITE. Low complexity predominate over residues 394-432; the sequence is NNTYQTTNGQYTQHNITPQQQYQVPSQNYQSQPPSMQSN.

It belongs to the STAM family. As to quaternary structure, component of the ESCRT-0 complex composed of HSE1 and VPS27.

Its subcellular location is the endosome membrane. In terms of biological role, component of the ESCRT-0 complex which is the sorting receptor for ubiquitinated cargo proteins at the multivesicular body (MVB). This Candida glabrata (strain ATCC 2001 / BCRC 20586 / JCM 3761 / NBRC 0622 / NRRL Y-65 / CBS 138) (Yeast) protein is Class E vacuolar protein-sorting machinery protein HSE1 (HSE1).